The sequence spans 272 residues: Indole-3-glycerol phosphate synthase (272 aa).

The protein belongs to the TrpC family.

It catalyses the reaction 1-(2-carboxyphenylamino)-1-deoxy-D-ribulose 5-phosphate + H(+) = (1S,2R)-1-C-(indol-3-yl)glycerol 3-phosphate + CO2 + H2O. Its pathway is amino-acid biosynthesis; L-tryptophan biosynthesis; L-tryptophan from chorismate: step 4/5. This chain is Indole-3-glycerol phosphate synthase, found in Paenarthrobacter aurescens (strain TC1).